The chain runs to 227 residues: UPF0173 metal-dependent hydrolase BCE_4747 (227 aa).

This sequence belongs to the UPF0173 family.

This is UPF0173 metal-dependent hydrolase BCE_4747 from Bacillus cereus (strain ATCC 10987 / NRS 248).